The chain runs to 120 residues: Putative gamma-glutamylcyclotransferase MJ1514 (120 aa).

Position 7–10 (7–10 (YGSL)) interacts with substrate. Glutamate 74 (proton acceptor) is an active-site residue.

This sequence belongs to the gamma-glutamylcyclotransferase family.

In terms of biological role, putative gamma-glutamylcyclotransferase. The protein is Putative gamma-glutamylcyclotransferase MJ1514 of Methanocaldococcus jannaschii (strain ATCC 43067 / DSM 2661 / JAL-1 / JCM 10045 / NBRC 100440) (Methanococcus jannaschii).